The following is a 192-amino-acid chain: Aminodeoxychorismate synthase component 2 (192 aa).

One can recognise a Glutamine amidotransferase type-1 domain in the interval 3–192 (SVLMIDNCDS…LANLIHRPCH (190 aa)). Active-site residues include Cys-83, His-170, and Glu-172.

In terms of assembly, monomer. Heterodimer consisting of two non-identical subunits: a glutamine amidotransferase subunit (PabA) and a aminodeoxychorismate synthase subunit (PabB).

The catalysed reaction is chorismate + L-glutamine = 4-amino-4-deoxychorismate + L-glutamate. The protein operates within cofactor biosynthesis; tetrahydrofolate biosynthesis; 4-aminobenzoate from chorismate: step 1/2. Its function is as follows. Part of a heterodimeric complex that catalyzes the two-step biosynthesis of 4-amino-4-deoxychorismate (ADC), a precursor of p-aminobenzoate (PABA) and tetrahydrofolate. In the first step, a glutamine amidotransferase (PabA) generates ammonia as a substrate that, along with chorismate, is used in the second step, catalyzed by aminodeoxychorismate synthase (PabB) to produce ADC. PabA converts glutamine into glutamate only in the presence of stoichiometric amounts of PabB. The protein is Aminodeoxychorismate synthase component 2 of Streptomyces lividans.